Consider the following 288-residue polypeptide: GTP-binding protein 8 (288 aa).

The 174-residue stretch at 109-282 (HRPEVCFIGR…RCFIADITGN (174 aa)) folds into the EngB-type G domain. GTP-binding positions include 117–124 (GRSNVGKS), 146–150 (GHTKK), 164–167 (DMPG), 226–229 (TKID), and 261–263 (VSA). Mg(2+) contacts are provided by serine 124 and threonine 148.

Belongs to the TRAFAC class TrmE-Era-EngA-EngB-Septin-like GTPase superfamily. EngB GTPase family. The cofactor is Mg(2+).

The protein is GTP-binding protein 8 (GTPBP8) of Bos taurus (Bovine).